Reading from the N-terminus, the 259-residue chain is Eukaryotic translation initiation factor 3 subunit G-2 (259 aa).

The RRM domain occupies 179 to 257 (SAVRISNLSE…LILSVEWSKP (79 aa)).

This sequence belongs to the eIF-3 subunit G family. Component of the eukaryotic translation initiation factor 3 (eIF-3) complex. The eIF-3 complex interacts with pix.

It localises to the cytoplasm. RNA-binding component of the eukaryotic translation initiation factor 3 (eIF-3) complex, which is involved in protein synthesis of a specialized repertoire of mRNAs and, together with other initiation factors, stimulates binding of mRNA and methionyl-tRNAi to the 40S ribosome. The eIF-3 complex specifically targets and initiates translation of a subset of mRNAs involved in cell proliferation. This subunit can bind 18S rRNA. This Drosophila mojavensis (Fruit fly) protein is Eukaryotic translation initiation factor 3 subunit G-2.